Consider the following 95-residue polypeptide: Acylphosphatase (95 aa).

An Acylphosphatase-like domain is found at 5-93; the sequence is RAHVFIRGKV…GEFKDFKILP (89 aa). Residues R20 and N38 contribute to the active site.

Belongs to the acylphosphatase family.

The enzyme catalyses an acyl phosphate + H2O = a carboxylate + phosphate + H(+). The chain is Acylphosphatase (acyP) from Pyrobaculum aerophilum (strain ATCC 51768 / DSM 7523 / JCM 9630 / CIP 104966 / NBRC 100827 / IM2).